We begin with the raw amino-acid sequence, 120 residues long: Small ribosomal subunit protein bS6 (120 aa).

A compositionally biased stretch (polar residues) spans 97–112; that stretch reads SNEPSPILKNQSTENT. The interval 97–120 is disordered; that stretch reads SNEPSPILKNQSTENTPVIDVTAN.

Belongs to the bacterial ribosomal protein bS6 family.

Functionally, binds together with bS18 to 16S ribosomal RNA. This chain is Small ribosomal subunit protein bS6, found in Rickettsia bellii (strain OSU 85-389).